Consider the following 67-residue polypeptide: Alpha-actitoxin-Ms11a-3 (67 aa).

The signal sequence occupies residues 1–24 (MASKIFFVLAVFLVMSAVLPESFA). Disulfide bonds link C26–C41, C33–C46, and C40–C61. Residue K66 is modified to Lysine amide.

The protein localises to the secreted. It localises to the nematocyst. Its function is as follows. Alpha-toxins act on postsynaptic membranes, they bind to the nicotinic acetylcholine receptors (nAChR) and thus inhibit them. This toxin shows inhibition against mouse alpha-1-beta-1-delta-epsilon (CHRNA1-CHRNB1-CHRND-CHRNE) (IC(50)=1215 nM), rat alpha-3-beta-4/CHRNA3-CHRNB4 (IC(50)=5.173 uM), rat alpha-7/CHRNA7 (IC(50)=4.786 uM), human alpha-7/CHRNA7 (IC(50)=8.869 uM), and rat alpha-9-alpha-10/CHRNA9-CHRNA10 (IC(50)=202 nM). Also competes with alpha-bungarotoxin for binding to orthosteric sites on muscle-type T.carlifornicus (IC(50)=256 nM) and human alpha-7/CHRNA7 nAChRs (IC(50)=19.81 uM). This is Alpha-actitoxin-Ms11a-3 from Metridium senile (Brown sea anemone).